The sequence spans 107 residues: ATP synthase peripheral stalk subunit F6, mitochondrial (107 aa).

The N-terminal 31 residues, 1 to 31 (MILQRLFRFSVIRSAVSVYLRRNIGVTAVAF), are a transit peptide targeting the mitochondrion. 3 positions are modified to N6-acetyllysine: Lys-40, Lys-45, and Lys-78. N6-acetyllysine; alternate is present on residues Lys-93 and Lys-98. Residues Lys-93 and Lys-98 each carry the N6-succinyllysine; alternate modification. Lys-104 is subject to N6-acetyllysine.

Belongs to the eukaryotic ATPase subunit F6 family. As to quaternary structure, component of the ATP synthase complex composed at least of ATP5F1A/subunit alpha, ATP5F1B/subunit beta, ATP5MC1/subunit c (homooctomer), MT-ATP6/subunit a, MT-ATP8/subunit 8, ATP5ME/subunit e, ATP5MF/subunit f, ATP5MG/subunit g, ATP5MK/subunit k, ATP5MJ/subunit j, ATP5F1C/subunit gamma, ATP5F1D/subunit delta, ATP5F1E/subunit epsilon, ATP5PF/subunit F6, ATP5PB/subunit b, ATP5PD/subunit d, ATP5PO/subunit OSCP. ATP synthase complex consists of a soluble F(1) head domain (subunits alpha(3) and beta(3)) - the catalytic core - and a membrane F(0) domain - the membrane proton channel (subunits c, a, 8, e, f, g, k and j). These two domains are linked by a central stalk (subunits gamma, delta, and epsilon) rotating inside the F1 region and a stationary peripheral stalk (subunits F6, b, d, and OSCP).

The protein resides in the mitochondrion. It localises to the mitochondrion inner membrane. Subunit F6, of the mitochondrial membrane ATP synthase complex (F(1)F(0) ATP synthase or Complex V) that produces ATP from ADP in the presence of a proton gradient across the membrane which is generated by electron transport complexes of the respiratory chain. ATP synthase complex consist of a soluble F(1) head domain - the catalytic core - and a membrane F(1) domain - the membrane proton channel. These two domains are linked by a central stalk rotating inside the F(1) region and a stationary peripheral stalk. During catalysis, ATP synthesis in the catalytic domain of F(1) is coupled via a rotary mechanism of the central stalk subunits to proton translocation. In vivo, can only synthesize ATP although its ATP hydrolase activity can be activated artificially in vitro. Part of the complex F(0) domain. Part of the complex F(0) domain and the peripheric stalk, which acts as a stator to hold the catalytic alpha(3)beta(3) subcomplex and subunit a/ATP6 static relative to the rotary elements. This Pongo abelii (Sumatran orangutan) protein is ATP synthase peripheral stalk subunit F6, mitochondrial.